A 331-amino-acid polypeptide reads, in one-letter code: Ketol-acid reductoisomerase (NADP(+)) (331 aa).

The KARI N-terminal Rossmann domain occupies 2–182 (AQLFYDTDAD…GGTRAGILET (181 aa)). NADP(+)-binding positions include 25-28 (YGSQ), serine 51, serine 53, and 83-86 (DEFQ). Residue histidine 108 is part of the active site. Residue glycine 134 participates in NADP(+) binding. Positions 183–328 (NFKEETETDL…KGLRSMFSWL (146 aa)) constitute a KARI C-terminal knotted domain. Mg(2+) contacts are provided by aspartate 191, glutamate 195, glutamate 227, and glutamate 231. Serine 252 is a substrate binding site.

This sequence belongs to the ketol-acid reductoisomerase family. It depends on Mg(2+) as a cofactor.

The catalysed reaction is (2R)-2,3-dihydroxy-3-methylbutanoate + NADP(+) = (2S)-2-acetolactate + NADPH + H(+). It carries out the reaction (2R,3R)-2,3-dihydroxy-3-methylpentanoate + NADP(+) = (S)-2-ethyl-2-hydroxy-3-oxobutanoate + NADPH + H(+). It functions in the pathway amino-acid biosynthesis; L-isoleucine biosynthesis; L-isoleucine from 2-oxobutanoate: step 2/4. It participates in amino-acid biosynthesis; L-valine biosynthesis; L-valine from pyruvate: step 2/4. Functionally, involved in the biosynthesis of branched-chain amino acids (BCAA). Catalyzes an alkyl-migration followed by a ketol-acid reduction of (S)-2-acetolactate (S2AL) to yield (R)-2,3-dihydroxy-isovalerate. In the isomerase reaction, S2AL is rearranged via a Mg-dependent methyl migration to produce 3-hydroxy-3-methyl-2-ketobutyrate (HMKB). In the reductase reaction, this 2-ketoacid undergoes a metal-dependent reduction by NADPH to yield (R)-2,3-dihydroxy-isovalerate. The polypeptide is Ketol-acid reductoisomerase (NADP(+)) (Synechococcus sp. (strain WH7803)).